Consider the following 625-residue polypeptide: tRNA uridine 5-carboxymethylaminomethyl modification enzyme MnmG (625 aa).

11–16 (GAGHAG) is a binding site for FAD. 271-285 (GPRYCPSIETKIVTF) provides a ligand contact to NAD(+).

This sequence belongs to the MnmG family. As to quaternary structure, homodimer. Heterotetramer of two MnmE and two MnmG subunits. It depends on FAD as a cofactor.

The protein resides in the cytoplasm. NAD-binding protein involved in the addition of a carboxymethylaminomethyl (cmnm) group at the wobble position (U34) of certain tRNAs, forming tRNA-cmnm(5)s(2)U34. The sequence is that of tRNA uridine 5-carboxymethylaminomethyl modification enzyme MnmG from Parabacteroides distasonis (strain ATCC 8503 / DSM 20701 / CIP 104284 / JCM 5825 / NCTC 11152).